The chain runs to 218 residues: Pyrrolidone-carboxylate peptidase (218 aa).

Catalysis depends on residues Glu81, Cys144, and His169.

The protein belongs to the peptidase C15 family. As to quaternary structure, homotetramer.

It is found in the cytoplasm. The catalysed reaction is Release of an N-terminal pyroglutamyl group from a polypeptide, the second amino acid generally not being Pro.. Its function is as follows. Removes 5-oxoproline from various penultimate amino acid residues except L-proline. This is Pyrrolidone-carboxylate peptidase (pcp) from Deinococcus radiodurans (strain ATCC 13939 / DSM 20539 / JCM 16871 / CCUG 27074 / LMG 4051 / NBRC 15346 / NCIMB 9279 / VKM B-1422 / R1).